Reading from the N-terminus, the 126-residue chain is S-adenosylmethionine decarboxylase proenzyme (126 aa).

Residue Ser-63 is the Schiff-base intermediate with substrate; via pyruvic acid of the active site. Ser-63 bears the Pyruvic acid (Ser); by autocatalysis mark. Residue His-68 is the Proton acceptor; for processing activity of the active site. Cys-83 functions as the Proton donor; for catalytic activity in the catalytic mechanism.

It belongs to the prokaryotic AdoMetDC family. Type 1 subfamily. In terms of assembly, heterotetramer of two alpha and two beta chains arranged as a dimer of alpha/beta heterodimers. It depends on pyruvate as a cofactor. Post-translationally, is synthesized initially as an inactive proenzyme. Formation of the active enzyme involves a self-maturation process in which the active site pyruvoyl group is generated from an internal serine residue via an autocatalytic post-translational modification. Two non-identical subunits are generated from the proenzyme in this reaction, and the pyruvate is formed at the N-terminus of the alpha chain, which is derived from the carboxyl end of the proenzyme. The post-translation cleavage follows an unusual pathway, termed non-hydrolytic serinolysis, in which the side chain hydroxyl group of the serine supplies its oxygen atom to form the C-terminus of the beta chain, while the remainder of the serine residue undergoes an oxidative deamination to produce ammonia and the pyruvoyl group blocking the N-terminus of the alpha chain.

The enzyme catalyses S-adenosyl-L-methionine + H(+) = S-adenosyl 3-(methylsulfanyl)propylamine + CO2. Its pathway is amine and polyamine biosynthesis; S-adenosylmethioninamine biosynthesis; S-adenosylmethioninamine from S-adenosyl-L-methionine: step 1/1. Its function is as follows. Catalyzes the decarboxylation of S-adenosylmethionine to S-adenosylmethioninamine (dcAdoMet), the propylamine donor required for the synthesis of the polyamines spermine and spermidine from the diamine putrescine. In Bacillus velezensis (strain DSM 23117 / BGSC 10A6 / LMG 26770 / FZB42) (Bacillus amyloliquefaciens subsp. plantarum), this protein is S-adenosylmethionine decarboxylase proenzyme.